A 216-amino-acid polypeptide reads, in one-letter code: MSHPNVLLLGAPGAGKGTQSRRLVDEFGVEHVTTGDALRANKTKDITHLDVEYDTPGAYMDAGELVPDAVVNEIVKTALDDADGYVLDGYPRNESQTEYLDSITDLDVVLYLDVDEDELVGRLTGRRVCEDCGATFHVSFNQPETEGVCDACGGSLYQREDDTEETARERITVYEENTAPVVEYFREQGVLAEVDGERTPDEVWTDVAAAVDERTA.

Position 13-18 (13-18 (GAGKGT)) interacts with ATP. Residues 33-66 (TTGDALRANKTKDITHLDVEYDTPGAYMDAGELV) are NMP. AMP is bound by residues threonine 34, arginine 39, 64–66 (ELV), 89–92 (GYPR), and glutamine 96. The interval 125–162 (GRRVCEDCGATFHVSFNQPETEGVCDACGGSLYQREDD) is LID. ATP is bound at residue arginine 126. Residues cysteine 129 and cysteine 132 each coordinate Zn(2+). 135-136 (TF) provides a ligand contact to ATP. Cysteine 149 and cysteine 152 together coordinate Zn(2+). The AMP site is built by arginine 159 and arginine 170. Arginine 198 contacts ATP.

The protein belongs to the adenylate kinase family. Monomer.

It is found in the cytoplasm. It catalyses the reaction AMP + ATP = 2 ADP. Its pathway is purine metabolism; AMP biosynthesis via salvage pathway; AMP from ADP: step 1/1. Its function is as follows. Catalyzes the reversible transfer of the terminal phosphate group between ATP and AMP. Plays an important role in cellular energy homeostasis and in adenine nucleotide metabolism. The polypeptide is Adenylate kinase (Halobacterium salinarum (strain ATCC 700922 / JCM 11081 / NRC-1) (Halobacterium halobium)).